We begin with the raw amino-acid sequence, 353 residues long: S-adenosylmethionine:tRNA ribosyltransferase-isomerase (353 aa).

It belongs to the QueA family. Monomer.

Its subcellular location is the cytoplasm. The enzyme catalyses 7-aminomethyl-7-carbaguanosine(34) in tRNA + S-adenosyl-L-methionine = epoxyqueuosine(34) in tRNA + adenine + L-methionine + 2 H(+). Its pathway is tRNA modification; tRNA-queuosine biosynthesis. In terms of biological role, transfers and isomerizes the ribose moiety from AdoMet to the 7-aminomethyl group of 7-deazaguanine (preQ1-tRNA) to give epoxyqueuosine (oQ-tRNA). The chain is S-adenosylmethionine:tRNA ribosyltransferase-isomerase from Nitrosomonas europaea (strain ATCC 19718 / CIP 103999 / KCTC 2705 / NBRC 14298).